Consider the following 151-residue polypeptide: UPF0208 membrane protein YPTB2595 (151 aa).

The next 2 membrane-spanning stretches (helical) occupy residues 46–66 (FGIR…IALG) and 69–89 (LGPA…GLWW).

The protein belongs to the UPF0208 family.

The protein resides in the cell inner membrane. The protein is UPF0208 membrane protein YPTB2595 of Yersinia pseudotuberculosis serotype I (strain IP32953).